Here is a 343-residue protein sequence, read N- to C-terminus: Heat-inducible transcription repressor HrcA (343 aa).

This sequence belongs to the HrcA family.

Its function is as follows. Negative regulator of class I heat shock genes (grpE-dnaK-dnaJ and groELS operons). Prevents heat-shock induction of these operons. The polypeptide is Heat-inducible transcription repressor HrcA (Natranaerobius thermophilus (strain ATCC BAA-1301 / DSM 18059 / JW/NM-WN-LF)).